Reading from the N-terminus, the 308-residue chain is MNLIICCTPLQVLIAEKIIAKFPHMPFYGVMLSTVSNKKFDFYAKRLAQQCQGFFSMVQHKDRFNLLKEILYLKRTFSGKHFDQVFVANINDLQIQFLLSAIDFNLLNTFDDGTINIVPNSLFYQDDPATLQRKLINVLLGNKYSIQSLRALSHTHYTIYKGFKNIIERVEPIELVAADNSEKVTSAVINVLLGQPVFAEDERNIALAERVIKQFNIHYYLPHPREKYRLAQVNYIDTELIFEDYILQQCQTHKYCVYTYFSSAIINIMNKSDNIEVVALKIDTENPAYDACYDLFDELGVNVIDIRE.

Asp201 acts as the Proton acceptor in catalysis. Residues 221 to 225, 242 to 243, and 262 to 263 each bind CMP-N-acetyl-beta-neuraminate; these read LPHPR, FE, and SS. The active-site Proton donor is the His223.

The protein belongs to the glycosyltransferase 52 family. Requires Divalent metal cations are not required for the alpha-2,3-sialyltransferase activity. as cofactor.

Functionally, catalyzes the transfer of sialic acid from the substrate CMP-N-acetylneuraminate to lactosyl lipids as preferred acceptor substrates in vitro, forming alpha-2,3-linked sialosides. Beta-1,4-linked galactosyl lipids are better substrates than beta-1,3-linked galactosyl lipids. The natural acceptor substrate may be cell surface oligosaccharides in lipooligosaccharide (LOS), whose sialylation has been demonstrated vital for the virulence of P.multocida. This chain is CMP-N-acetylneuraminate:beta-galactoside alpha-2,3-sialyltransferase (lst), found in Pasteurella multocida (strain Pm70).